The following is a 147-amino-acid chain: Hemoglobin subunit delta (147 aa).

Valine 2 bears the N-acetylalanine; in variant Niigata mark. The Globin domain maps to 3–147 (HLTPEEKTAV…VANALAHKYH (145 aa)). Position 51 is a phosphoserine (serine 51). Positions 64 and 93 each coordinate heme b.

This sequence belongs to the globin family. Heterotetramer of two alpha chains and two delta chains in adult hemoglobin A2 (HbA2). HbA2 represents less than 3.5% of adult hemoglobin. Red blood cells.

Functionally, involved in oxygen transport from the lung to the various peripheral tissues. This Homo sapiens (Human) protein is Hemoglobin subunit delta (HBD).